The sequence spans 259 residues: Phosphoribosylaminoimidazole-succinocarboxamide synthase (259 aa).

Belongs to the SAICAR synthetase family.

It carries out the reaction 5-amino-1-(5-phospho-D-ribosyl)imidazole-4-carboxylate + L-aspartate + ATP = (2S)-2-[5-amino-1-(5-phospho-beta-D-ribosyl)imidazole-4-carboxamido]succinate + ADP + phosphate + 2 H(+). It functions in the pathway purine metabolism; IMP biosynthesis via de novo pathway; 5-amino-1-(5-phospho-D-ribosyl)imidazole-4-carboxamide from 5-amino-1-(5-phospho-D-ribosyl)imidazole-4-carboxylate: step 1/2. This chain is Phosphoribosylaminoimidazole-succinocarboxamide synthase, found in Zymomonas mobilis subsp. mobilis (strain ATCC 31821 / ZM4 / CP4).